The sequence spans 239 residues: Probable transcriptional regulatory protein Bcer98_0465 (239 aa).

Belongs to the TACO1 family. YeeN subfamily.

It is found in the cytoplasm. The protein is Probable transcriptional regulatory protein Bcer98_0465 of Bacillus cytotoxicus (strain DSM 22905 / CIP 110041 / 391-98 / NVH 391-98).